We begin with the raw amino-acid sequence, 582 residues long: Phosphoribosylaminoimidazole carboxylase (582 aa).

Residues 114 to 305 (KKYLAERGVA…QFENHLRAIL (192 aa)) form the ATP-grasp domain. 143–200 (AGRLGLPLMLKAKTLAYDGRGNSPLKSASSGDIQASLKFLGDRPLYAEGWAPFVKEVA) lines the ATP pocket.

This sequence in the C-terminal section; belongs to the AIR carboxylase family. Class I subfamily.

The enzyme catalyses 5-amino-1-(5-phospho-D-ribosyl)imidazole-4-carboxylate + H(+) = 5-amino-1-(5-phospho-beta-D-ribosyl)imidazole + CO2. It participates in purine metabolism; IMP biosynthesis via de novo pathway; 5-amino-1-(5-phospho-D-ribosyl)imidazole-4-carboxylate from 5-amino-1-(5-phospho-D-ribosyl)imidazole (carboxylase route): step 1/1. This is Phosphoribosylaminoimidazole carboxylase (ADE2) from Cryptococcus neoformans var. neoformans serotype D (strain JEC21 / ATCC MYA-565) (Filobasidiella neoformans).